A 103-amino-acid polypeptide reads, in one-letter code: Thioredoxin-1 (103 aa).

The Thioredoxin domain maps to 2–103 (VKQVSDSSEF…KLEASIKANL (102 aa)). Active-site nucleophile residues include C30 and C33. Cysteines 30 and 33 form a disulfide.

Belongs to the thioredoxin family.

Functionally, participates in various redox reactions through the reversible oxidation of its active center dithiol to a disulfide and catalyzes dithiol-disulfide exchange reactions. This Schizosaccharomyces pombe (strain 972 / ATCC 24843) (Fission yeast) protein is Thioredoxin-1 (trx1).